The primary structure comprises 459 residues: Tubulin gamma chain (459 aa).

Position 142–148 (A142–G148) interacts with GTP. The segment at A440–G459 is disordered.

The protein belongs to the tubulin family.

It localises to the cytoplasm. Its subcellular location is the cytoskeleton. The protein resides in the microtubule organizing center. It is found in the spindle pole body. Tubulin is the major constituent of microtubules. The gamma chain is found at microtubule organizing centers (MTOC) such as the spindle poles or the centrosome, suggesting that it is involved in the minus-end nucleation of microtubule assembly. In Cochliobolus heterostrophus (strain C5 / ATCC 48332 / race O) (Southern corn leaf blight fungus), this protein is Tubulin gamma chain (TUB4).